Here is a 153-residue protein sequence, read N- to C-terminus: Putative nuclear shuttle protein (153 aa).

This sequence belongs to the nanoviridae nuclear shuttle protein family.

The protein localises to the host nucleus. The protein resides in the host cytoplasm. In terms of biological role, putative nuclear shuttle protein. The polypeptide is Putative nuclear shuttle protein (DNA-N) (Trifolium subterraneum (Subterranean clover)).